Reading from the N-terminus, the 258-residue chain is Aquaglyceroporin (258 aa).

The Cytoplasmic portion of the chain corresponds to 1–16 (MKVTFGNEYIKNFLGE). Residues 17 to 37 (FIGTFVLMFLGEGTTANHFAV) traverse the membrane as a helical segment. Topologically, residues 38-45 (PIKNDWLR) are extracellular. A helical membrane pass occupies residues 46-66 (LCIGWGLGVFFGILISAKLSG). Residues Ala67 and Asn70 each coordinate glycerol. Residues 67–87 (AHLNLAVTVGLSTIKKFNYKQ) lie on the Cytoplasmic side of the membrane. The chain crosses the membrane as a helical span at residues 88 to 108 (IPLYFAGQLLGALSATASVYG). Over 109-133 (LYYGFVSDQTIPKFSWETGKHANVH) the chain is Extracellular. Residues 134–154 (IASAFMHEFILTGILLLIILS) form a helical membrane-spanning segment. The Cytoplasmic segment spans residues 155-171 (VTDENICGKFHVLKVSS). The chain crosses the membrane as a helical span at residues 172–192 (IVGLAIICIGISFGGNTGFAL). Residues Gly189, Phe190, Asn193, and Arg196 each contribute to the glycerol site. The Extracellular segment spans residues 193 to 217 (NPSRDLGARILSAIAYGFEAFTRDK). The chain crosses the membrane as a helical span at residues 218–238 (CYFWIPLIAPIIGSIIFCQIY). The Cytoplasmic segment spans residues 239 to 258 (DKIVAPLVVISEHDKGALEI).

This sequence belongs to the MIP/aquaporin (TC 1.A.8) family.

The protein resides in the cell membrane. The catalysed reaction is H2O(in) = H2O(out). It catalyses the reaction glycerol(in) = glycerol(out). It carries out the reaction urea(in) = urea(out). Functionally, mediates water and glycerol transport across the cell membrane. Permeable to urea. Required for efficient progression of parasites through the liver stages. This is Aquaglyceroporin from Plasmodium berghei (strain Anka).